Here is a 333-residue protein sequence, read N- to C-terminus: tRNA-dihydrouridine(16) synthase (333 aa).

Residues 19–21 (PMQ) and Gln80 contribute to the FMN site. Cys110 serves as the catalytic Proton donor. FMN is bound by residues Lys151, 211–213 (NGD), and 235–236 (GR).

The protein belongs to the Dus family. DusC subfamily. It depends on FMN as a cofactor.

It carries out the reaction 5,6-dihydrouridine(16) in tRNA + NADP(+) = uridine(16) in tRNA + NADPH + H(+). It catalyses the reaction 5,6-dihydrouridine(16) in tRNA + NAD(+) = uridine(16) in tRNA + NADH + H(+). Its function is as follows. Catalyzes the synthesis of 5,6-dihydrouridine (D), a modified base found in the D-loop of most tRNAs, via the reduction of the C5-C6 double bond in target uridines. Specifically modifies U16 in tRNAs. The protein is tRNA-dihydrouridine(16) synthase of Neisseria meningitidis serogroup A / serotype 4A (strain DSM 15465 / Z2491).